The sequence spans 190 residues: Guanylate kinase (190 aa).

Positions 3-185 (NYIFIISAPS…SLEQLCKYFE (183 aa)) constitute a Guanylate kinase-like domain. 10-17 (APSGAGKS) contacts ATP.

It belongs to the guanylate kinase family.

It localises to the cytoplasm. The enzyme catalyses GMP + ATP = GDP + ADP. Functionally, essential for recycling GMP and indirectly, cGMP. The chain is Guanylate kinase from Francisella tularensis subsp. holarctica (strain LVS).